The sequence spans 271 residues: MAELDDFFAKKDKKKSKNKTKFVTADEMVKNLEDGTKREVVKPKKPEVAAGGVAVVGENENSGTKVPESAPPVEEEWKEFEEEQRKDYSGLKIGQLSTISSARSRTAQESSESQAARVPSAPDGGNYNEDDEDSNGYDNADVNKERVGHGPWKKVVPAEEVMQIPVPVEVEKHSSKTYVSPALRYSQQAGSGLGGGPTGGALRPRRAAPDITNTEFFPTLSAARPEEQRKKKNEPAFEEVRHGSRFQRVQESTAAPVAASNRFQSLDDEAS.

The span at 37–47 (KREVVKPKKPE) shows a compositional bias: basic and acidic residues. 2 disordered regions span residues 37-151 (KREV…GHGP) and 186-271 (SQQA…DEAS). Residues 48-61 (VAAGGVAVVGENEN) are compositionally biased toward low complexity. The span at 73–82 (VEEEWKEFEE) shows a compositional bias: acidic residues. Over residues 95–114 (QLSTISSARSRTAQESSESQ) the composition is skewed to polar residues. Position 134 is a phosphoserine (Ser-134). Residues 224-242 (RPEEQRKKKNEPAFEEVRH) show a composition bias toward basic and acidic residues.

Belongs to the CDV3 family.

The protein is Protein CDV3 homolog of Drosophila melanogaster (Fruit fly).